We begin with the raw amino-acid sequence, 521 residues long: Amidase 1 (521 aa).

Catalysis depends on charge relay system residues K112 and S187. Substrate is bound by residues S187 and 208–211 (IGGS). S211 functions as the Acyl-ester intermediate in the catalytic mechanism.

This sequence belongs to the amidase family.

It catalyses the reaction a monocarboxylic acid amide + H2O = a monocarboxylate + NH4(+). It functions in the pathway xenobiotic degradation. Functionally, amidase; part of the Fusarium detoxification of benzoxazolinone cluster 1 (FDB1) involved in the degradation of benzoxazolinones produced by the host plant. Maize, wheat, and rye produce the 2 benzoxazinone phytoanticipins 2,4-dihy-droxy-7-methoxy-1,4-benzoxazin-3-one (DIMBOA) and 2,4-dihydroxy-1,4-benzoxazin-3-one (DIBOA) that, due to their inherent instability once released, spontaneously degrade to the more stable corresponding benzoxazolinones, 6-methoxy-2-benzoxazolinone (MBOA) and 2-benzoxazolinone (BOA), respectively. The first step in the detoxification of benzoxazolinones involves the hydrolysis of the cyclic ester bond of benzoxazolinones by the FDB1 cluster gamma-lactamase MBL1 to aminophenols. MBL1 is able to convert BOA into 2-aminophenol (2-AP), as well as MBOA into 5-methoxy-2-aminophenol (2-AMP). The FDB2 cluster N-malonyltransferase FDB2/NAT1 then metabolizes aminophenols via N-malonylation to non-toxic malonamic acids. FDB2/NAT1 converts 2-AP into N-(2-hydroxyphenyl) malonamic acid (HPMA) and 2-AMP into N-(2-hydroxy-4-methoxyphenyl) malonamic acid (HMPMA). The duplicated dienlactone hydrolases DLH1 and DLH2 may provide redundant function for hydrolyzing the lactone moiety in the BOA molecule. The roles of the amidases an other enzymes encoded by the 2 FDB clusters have not been identified so far. This Gibberella moniliformis (strain M3125 / FGSC 7600) (Maize ear and stalk rot fungus) protein is Amidase 1.